Consider the following 203-residue polypeptide: MSTFITFEGPEGAGKTSVIKKVSERLAKEYDIVTTREPGGVLTSEEIRRIVLDGDSIDIRTEAMLFAASRREHLVEKIIPSLQAGKIVLCDRYIDSSLAYQGYARGIGIKEVKLLNEFAINGLYPDLTIYLDVDAEIGRQRILKNNREQNRLDKEEKAFHEKVIEGYQKVISDNPHRFIKVNANHSLDKVVEETYQSIIKYLK.

9 to 16 (GPEGAGKT) contacts ATP.

This sequence belongs to the thymidylate kinase family.

The catalysed reaction is dTMP + ATP = dTDP + ADP. Its function is as follows. Phosphorylation of dTMP to form dTDP in both de novo and salvage pathways of dTTP synthesis. The protein is Thymidylate kinase of Staphylococcus epidermidis (strain ATCC 35984 / DSM 28319 / BCRC 17069 / CCUG 31568 / BM 3577 / RP62A).